We begin with the raw amino-acid sequence, 194 residues long: Peptidyl-tRNA hydrolase (194 aa).

TRNA is bound at residue Tyr17. His22 acts as the Proton acceptor in catalysis. TRNA contacts are provided by Tyr68, Asn70, and Asn116.

The protein belongs to the PTH family. As to quaternary structure, monomer.

It localises to the cytoplasm. It catalyses the reaction an N-acyl-L-alpha-aminoacyl-tRNA + H2O = an N-acyl-L-amino acid + a tRNA + H(+). Its function is as follows. Hydrolyzes ribosome-free peptidyl-tRNAs (with 1 or more amino acids incorporated), which drop off the ribosome during protein synthesis, or as a result of ribosome stalling. Catalyzes the release of premature peptidyl moieties from peptidyl-tRNA molecules trapped in stalled 50S ribosomal subunits, and thus maintains levels of free tRNAs and 50S ribosomes. This chain is Peptidyl-tRNA hydrolase, found in Pseudomonas paraeruginosa (strain DSM 24068 / PA7) (Pseudomonas aeruginosa (strain PA7)).